Here is a 362-residue protein sequence, read N- to C-terminus: Phospho-2-dehydro-3-deoxyheptonate aldolase (362 aa).

The protein belongs to the class-I DAHP synthase family.

The catalysed reaction is D-erythrose 4-phosphate + phosphoenolpyruvate + H2O = 7-phospho-2-dehydro-3-deoxy-D-arabino-heptonate + phosphate. It functions in the pathway metabolic intermediate biosynthesis; chorismate biosynthesis; chorismate from D-erythrose 4-phosphate and phosphoenolpyruvate: step 1/7. Functionally, stereospecific condensation of phosphoenolpyruvate (PEP) and D-erythrose-4-phosphate (E4P) giving rise to 3-deoxy-D-arabino-heptulosonate-7-phosphate (DAHP). This is Phospho-2-dehydro-3-deoxyheptonate aldolase (aroG) from Haemophilus influenzae (strain ATCC 51907 / DSM 11121 / KW20 / Rd).